The following is a 75-amino-acid chain: uncharacterized protein (75 aa).

A helical transmembrane segment spans residues 4 to 26; that stretch reads PSLLFLGFSGVLAFGEVGWVGVY.

The protein resides in the membrane. This is an uncharacterized protein from Treponema pallidum (strain Nichols).